The following is an 834-amino-acid chain: DNA polymerase I, thermostable (834 aa).

The 87-residue stretch at 176–262 (RPEQWVDFRA…DLPLEVDLAQ (87 aa)) folds into the 5'-3' exonuclease domain. The interval 412–834 (ERLHRNLLKR…MGEDWLSAKG (423 aa)) is polymerase.

Belongs to the DNA polymerase type-A family.

The enzyme catalyses DNA(n) + a 2'-deoxyribonucleoside 5'-triphosphate = DNA(n+1) + diphosphate. Its function is as follows. In addition to polymerase activity, this DNA polymerase exhibits 5'-3' exonuclease activity. In Thermus thermophilus (strain ATCC 27634 / DSM 579 / HB8), this protein is DNA polymerase I, thermostable (polA).